The primary structure comprises 217 residues: Acyl-homoserine-lactone synthase (217 aa).

This sequence belongs to the autoinducer synthase family.

The enzyme catalyses a fatty acyl-[ACP] + S-adenosyl-L-methionine = an N-acyl-L-homoserine lactone + S-methyl-5'-thioadenosine + holo-[ACP] + H(+). In terms of biological role, required for the synthesis of OHHL (N-(3-oxohexanoyl)-L-homoserine lactone), an autoinducer molecule which binds to ExpR and thus acts in virulence (soft rot disease) through the activation of genes for plant tissue macerating enzymes. This Pectobacterium parmentieri protein is Acyl-homoserine-lactone synthase (expI).